The chain runs to 300 residues: Ribonuclease HIII (300 aa).

The region spanning 86-300 is the RNase H type-2 domain; the sequence is RSRIGVDESG…FNEVLGSGNQ (215 aa). A divalent metal cation-binding residues include Asp-92, Glu-93, and Asp-196.

This sequence belongs to the RNase HII family. RnhC subfamily. It depends on Mn(2+) as a cofactor. The cofactor is Mg(2+).

The protein localises to the cytoplasm. It carries out the reaction Endonucleolytic cleavage to 5'-phosphomonoester.. In terms of biological role, endonuclease that specifically degrades the RNA of RNA-DNA hybrids. This is Ribonuclease HIII from Chlamydia trachomatis serovar A (strain ATCC VR-571B / DSM 19440 / HAR-13).